The following is a 398-amino-acid chain: Tyrosine--tRNA ligase (398 aa).

The 'HIGH' region signature appears at 48–57; the sequence is PTGADIHLGH. The 'KMSKS' region motif lies at 235–239; it reads KMSKS. Lysine 238 contacts ATP. Positions 334–398 constitute an S4 RNA-binding domain; it reads VKLAYLLGAT…GKNKFMRLVP (65 aa).

Belongs to the class-I aminoacyl-tRNA synthetase family. TyrS type 2 subfamily. As to quaternary structure, homodimer.

Its subcellular location is the cytoplasm. It catalyses the reaction tRNA(Tyr) + L-tyrosine + ATP = L-tyrosyl-tRNA(Tyr) + AMP + diphosphate + H(+). Catalyzes the attachment of tyrosine to tRNA(Tyr) in a two-step reaction: tyrosine is first activated by ATP to form Tyr-AMP and then transferred to the acceptor end of tRNA(Tyr). The chain is Tyrosine--tRNA ligase from Nostoc sp. (strain PCC 7120 / SAG 25.82 / UTEX 2576).